Here is a 93-residue protein sequence, read N- to C-terminus: Precursor of CEP13 (93 aa).

The N-terminal stretch at 1–27 is a signal peptide; that stretch reads MARPRISISMICLLILIVGFVLQSSQA. A propeptide spanning residues 28–78 is cleaved from the precursor; it reads RKVLVPYGTSKGLFLSALPKGNVPPSGPSDKGHTSPPDDTDQRMVPENSPE. Residues 45–93 form a disordered region; that stretch reads LPKGNVPPSGPSDKGHTSPPDDTDQRMVPENSPEIYRRLESVPSPGVGH. A hydroxyproline mark is found at Pro-87 and Pro-89.

Belongs to the C-terminally encoded plant signaling peptide (CEP) family. Interacts with CEP receptors (e.g. CEPR1 and CEPR2). The mature small signaling peptide is generated by proteolytic processing of the longer precursor.

The protein resides in the secreted. Its subcellular location is the extracellular space. It localises to the apoplast. In terms of biological role, extracellular signaling peptide that may regulate primary root growth rate and systemic nitrogen (N)-demand signaling. The sequence is that of Precursor of CEP13 from Arabidopsis thaliana (Mouse-ear cress).